Reading from the N-terminus, the 372-residue chain is DNA replication and repair protein RecF (372 aa).

Residue 30 to 37 (GENGQGKT) participates in ATP binding.

It belongs to the RecF family.

The protein resides in the cytoplasm. In terms of biological role, the RecF protein is involved in DNA metabolism; it is required for DNA replication and normal SOS inducibility. RecF binds preferentially to single-stranded, linear DNA. It also seems to bind ATP. The polypeptide is DNA replication and repair protein RecF (Anaeromyxobacter dehalogenans (strain 2CP-1 / ATCC BAA-258)).